The sequence spans 262 residues: Small ribosomal subunit protein eS1 (262 aa).

Residues 234–251 (DPKEDSGKNVKSLPESKE) show a composition bias toward basic and acidic residues. The interval 234 to 262 (DPKEDSGKNVKSLPESKEATNILTAELKH) is disordered.

It belongs to the eukaryotic ribosomal protein eS1 family. As to quaternary structure, component of the small ribosomal subunit. Mature ribosomes consist of a small (40S) and a large (60S) subunit. The 40S subunit contains about 33 different proteins and 1 molecule of RNA (18S). The 60S subunit contains about 49 different proteins and 3 molecules of RNA (25S, 5.8S and 5S).

It is found in the cytoplasm. The chain is Small ribosomal subunit protein eS1 from Plasmodium yoelii yoelii.